Consider the following 287-residue polypeptide: Deoxyuridine 5'-triphosphate nucleotidohydrolase (287 aa).

173–175 serves as a coordination point for substrate; that stretch reads RSG. A compositionally biased stretch (low complexity) spans 264-275; that stretch reads SSSKDTSDSQMS. The interval 264–287 is disordered; sequence SSSKDTSDSQMSRGDAGLGSSGLM.

It belongs to the dUTPase family. Mg(2+) is required as a cofactor.

The catalysed reaction is dUTP + H2O = dUMP + diphosphate + H(+). Functionally, involved in nucleotide metabolism: produces dUMP, the immediate precursor of thymidine nucleotides and decreases the intracellular concentration of dUTP to avoid uracil incorporation into viral DNA. This is Deoxyuridine 5'-triphosphate nucleotidohydrolase from Saimiriine herpesvirus 2 (strain 11) (SaHV-2).